A 320-amino-acid chain; its full sequence is o-succinylbenzoate synthase (320 aa).

Lys-133 serves as the catalytic Proton donor. Mg(2+) contacts are provided by Asp-161, Glu-190, and Asp-213. Lys-235 acts as the Proton acceptor in catalysis.

This sequence belongs to the mandelate racemase/muconate lactonizing enzyme family. MenC type 1 subfamily. It depends on a divalent metal cation as a cofactor.

It catalyses the reaction (1R,6R)-6-hydroxy-2-succinyl-cyclohexa-2,4-diene-1-carboxylate = 2-succinylbenzoate + H2O. The protein operates within quinol/quinone metabolism; 1,4-dihydroxy-2-naphthoate biosynthesis; 1,4-dihydroxy-2-naphthoate from chorismate: step 4/7. It participates in quinol/quinone metabolism; menaquinone biosynthesis. In terms of biological role, converts 2-succinyl-6-hydroxy-2,4-cyclohexadiene-1-carboxylate (SHCHC) to 2-succinylbenzoate (OSB). The polypeptide is o-succinylbenzoate synthase (Escherichia coli O127:H6 (strain E2348/69 / EPEC)).